Consider the following 631-residue polypeptide: Dolichyl-diphosphooligosaccharide--protein glycosyltransferase subunit 2 (631 aa).

A signal peptide spans Met1 to Ala22. The Lumenal portion of the chain corresponds to Leu23–Val540. The N-linked (GlcNAc...) asparagine glycan is linked to Asn106. Lys154 participates in a covalent cross-link: Glycyl lysine isopeptide (Lys-Gly) (interchain with G-Cter in ubiquitin). A helical transmembrane segment spans residues Val541–Ile561. The Cytoplasmic portion of the chain corresponds to Arg562–Thr571. The chain crosses the membrane as a helical span at residues Phe572–Ile592. The Lumenal segment spans residues Tyr593–Gln596. Residues Leu597–Gly617 traverse the membrane as a helical segment. The Cytoplasmic portion of the chain corresponds to Asn618 to His631.

The protein belongs to the SWP1 family. In terms of assembly, component of the oligosaccharyltransferase (OST) complex. OST exists in two different complex forms which contain common core subunits RPN1, RPN2, OST48, OST4, DAD1 and TMEM258, either STT3A or STT3B as catalytic subunits, and form-specific accessory subunits. STT3A complex assembly occurs through the formation of 3 subcomplexes. Subcomplex 1 contains RPN1 and TMEM258, subcomplex 2 contains the STT3A-specific subunits STT3A, DC2/OSTC, and KCP2 as well as the core subunit OST4, and subcomplex 3 contains RPN2, DAD1, and OST48. The STT3A complex can form stable complexes with the Sec61 complex or with both the Sec61 and TRAP complexes. Interacts with DDI2. Interacts with TMEM35A/NACHO.

Its subcellular location is the endoplasmic reticulum. It is found in the endoplasmic reticulum membrane. It functions in the pathway protein modification; protein glycosylation. In terms of biological role, subunit of the oligosaccharyl transferase (OST) complex that catalyzes the initial transfer of a defined glycan (Glc(3)Man(9)GlcNAc(2) in eukaryotes) from the lipid carrier dolichol-pyrophosphate to an asparagine residue within an Asn-X-Ser/Thr consensus motif in nascent polypeptide chains, the first step in protein N-glycosylation. N-glycosylation occurs cotranslationally and the complex associates with the Sec61 complex at the channel-forming translocon complex that mediates protein translocation across the endoplasmic reticulum (ER). All subunits are required for a maximal enzyme activity. The sequence is that of Dolichyl-diphosphooligosaccharide--protein glycosyltransferase subunit 2 from Mus musculus (Mouse).